An 84-amino-acid chain; its full sequence is Peptide Ctry2346 (84 aa).

A signal peptide spans 1 to 23; the sequence is MKTQTLLFTFSLVLLMVATQTEA. Leucine amide is present on Leu33. A propeptide spanning residues 37–84 is cleaved from the precursor; it reads GLLDNLLGKRGLLFGKRALTNQDLFDLAYDPSLSAADMDALEMLLENY.

Belongs to the non-disulfide-bridged peptide (NDBP) superfamily. Short antimicrobial peptide (group 4) family. In terms of tissue distribution, expressed by the venom gland.

It localises to the secreted. The protein resides in the target cell membrane. Its function is as follows. Antimicrobial peptide. The chain is Peptide Ctry2346 from Chaerilus tryznai (Scorpion).